A 152-amino-acid polypeptide reads, in one-letter code: Small ribosomal subunit protein bS6 (152 aa).

Positions 96–152 (HEEGPSAMLQKRDRDDRGPREGGDRGPRREFGDRPPRRDGDFQRGPRPDRAPREDRA) are disordered.

The protein belongs to the bacterial ribosomal protein bS6 family.

Functionally, binds together with bS18 to 16S ribosomal RNA. The polypeptide is Small ribosomal subunit protein bS6 (Rhizobium etli (strain CIAT 652)).